The following is a 349-amino-acid chain: Septin-2 (349 aa).

One can recognise a Septin-type G domain in the interval 33-305; that stretch reads KGFEFTLMVV…ENFRSERLKR (273 aa). The tract at residues 43 to 50 is G1 motif; the sequence is GESGLGKS. GTP is bound by residues 43–50, T77, G103, 182–190, G240, and R255; these read GESGLGKS and KADTLTLKE. A G3 motif region spans residues 100 to 103; that stretch reads DTPG. Residues 181–184 are G4 motif; that stretch reads AKAD. Positions 259-269 are important for dimerization; the sequence is WGVVEVENPEH.

Belongs to the TRAFAC class TrmE-Era-EngA-EngB-Septin-like GTPase superfamily. Septin GTPase family. Septins polymerize into heterooligomeric protein complexes that form filaments, and associate with cellular membranes, actin filaments and microtubules. GTPase activity is required for filament formation. Can form heterooligomers with other family members and form filaments.

The protein localises to the cytoplasm. The protein resides in the cytoskeleton. It is found in the spindle. It localises to the cleavage furrow. Its subcellular location is the midbody. The protein localises to the cell cortex. The protein resides in the cell projection. It is found in the cilium membrane. Functionally, filament-forming cytoskeletal GTPase. Required for normal organization of the actin cytoskeleton. Plays a role in the biogenesis of polarized columnar-shaped epithelium by maintaining polyglutamylated microtubules, thus facilitating efficient vesicle transport, and by impeding MAP4 binding to tubulin. Required for the progression through mitosis. Forms a scaffold at the midplane of the mitotic splindle required to maintain CENPE localization at kinetochores and consequently chromosome congression. During anaphase, may be required for chromosome segregation and spindle elongation. Plays a role in ciliogenesis and collective cell movements. In cilia, required for the integrity of the diffusion barrier at the base of the primary cilium that prevents diffusion of transmembrane proteins between the cilia and plasma membranes. This chain is Septin-2, found in Gallus gallus (Chicken).